Reading from the N-terminus, the 125-residue chain is uncharacterized protein (125 aa).

Residues 100–120 (YFKVAFALAVLTPLAIWIFYI) form a helical membrane-spanning segment.

The protein resides in the membrane. This is an uncharacterized protein from Saccharomyces cerevisiae (strain ATCC 204508 / S288c) (Baker's yeast).